Consider the following 341-residue polypeptide: uncharacterized protein (341 aa).

Helical transmembrane passes span 8 to 28, 63 to 83, 171 to 191, and 317 to 337; these read LMLT…PLII, LMYF…VFAL, IYIM…IALS, and EFLV…KIFL. The VWFA domain occupies 101 to 305; sequence DIVIVLDISP…SKKENLERKI (205 aa).

It is found in the cell membrane. This is an uncharacterized protein from Borreliella burgdorferi (strain ATCC 35210 / DSM 4680 / CIP 102532 / B31) (Borrelia burgdorferi).